A 164-amino-acid chain; its full sequence is Lipocalin-like 1 protein (164 aa).

The protein belongs to the calycin superfamily. Lipocalin family.

This is Lipocalin-like 1 protein (LCNL1) from Homo sapiens (Human).